Here is a 285-residue protein sequence, read N- to C-terminus: RNA polymerase sigma factor RpoH (285 aa).

Positions 53-122 (LILSHLRFVV…IHEYVLRNWR (70 aa)) are sigma-70 factor domain-2. The short motif at 77–80 (DLVQ) is the Interaction with polymerase core subunit RpoC element. Residues 229 to 280 (ALASLDERSQHIVRSRWLDDDKATLQDLAEMYGVSAERIRQLEKNAMKKLKM) are sigma-70 factor domain-4. Positions 253 to 272 (LQDLAEMYGVSAERIRQLEK) form a DNA-binding region, H-T-H motif.

This sequence belongs to the sigma-70 factor family. RpoH subfamily. Interacts with the RNA polymerase core enzyme.

Its subcellular location is the cytoplasm. Its function is as follows. Sigma factors are initiation factors that promote the attachment of RNA polymerase to specific initiation sites and are then released. This sigma factor is involved in regulation of expression of heat shock genes. This Vibrio vulnificus (strain CMCP6) protein is RNA polymerase sigma factor RpoH.